Consider the following 95-residue polypeptide: Small ribosomal subunit protein bS6 (95 aa).

The protein belongs to the bacterial ribosomal protein bS6 family.

In terms of biological role, binds together with bS18 to 16S ribosomal RNA. This Onion yellows phytoplasma (strain OY-M) protein is Small ribosomal subunit protein bS6.